A 252-amino-acid polypeptide reads, in one-letter code: Imidazole glycerol phosphate synthase subunit HisF (252 aa).

Active-site residues include aspartate 11 and aspartate 130.

This sequence belongs to the HisA/HisF family. Heterodimer of HisH and HisF.

The protein localises to the cytoplasm. It carries out the reaction 5-[(5-phospho-1-deoxy-D-ribulos-1-ylimino)methylamino]-1-(5-phospho-beta-D-ribosyl)imidazole-4-carboxamide + L-glutamine = D-erythro-1-(imidazol-4-yl)glycerol 3-phosphate + 5-amino-1-(5-phospho-beta-D-ribosyl)imidazole-4-carboxamide + L-glutamate + H(+). Its pathway is amino-acid biosynthesis; L-histidine biosynthesis; L-histidine from 5-phospho-alpha-D-ribose 1-diphosphate: step 5/9. Functionally, IGPS catalyzes the conversion of PRFAR and glutamine to IGP, AICAR and glutamate. The HisF subunit catalyzes the cyclization activity that produces IGP and AICAR from PRFAR using the ammonia provided by the HisH subunit. The chain is Imidazole glycerol phosphate synthase subunit HisF from Geobacillus kaustophilus (strain HTA426).